The primary structure comprises 123 residues: Phospholipase A2 (123 aa).

7 disulfides stabilise this stretch: cysteine 11-cysteine 77, cysteine 27-cysteine 123, cysteine 29-cysteine 45, cysteine 44-cysteine 105, cysteine 51-cysteine 98, cysteine 61-cysteine 91, and cysteine 84-cysteine 96. Ca(2+)-binding residues include tyrosine 28, glycine 30, and glycine 32. Histidine 48 is an active-site residue. Aspartate 49 serves as a coordination point for Ca(2+). Residue aspartate 99 is part of the active site.

It belongs to the phospholipase A2 family. As to quaternary structure, monomer or homodimer. Ca(2+) serves as cofactor. In terms of processing, activated by trypsin cleavage in the duodenum. Can also be activated by thrombin or autocatalytically.

Its subcellular location is the secreted. The enzyme catalyses a 1,2-diacyl-sn-glycero-3-phosphocholine + H2O = a 1-acyl-sn-glycero-3-phosphocholine + a fatty acid + H(+). The catalysed reaction is 1,2-ditetradecanoyl-sn-glycero-3-phosphocholine + H2O = 1-tetradecanoyl-sn-glycero-3-phosphocholine + tetradecanoate + H(+). It carries out the reaction 1,2-dihexadecanoyl-sn-glycero-3-phosphocholine + H2O = 1-hexadecanoyl-sn-glycero-3-phosphocholine + hexadecanoate + H(+). It catalyses the reaction 1-hexadecanoyl-2-(9Z-octadecenoyl)-sn-glycero-3-phosphocholine + H2O = 1-hexadecanoyl-sn-glycero-3-phosphocholine + (9Z)-octadecenoate + H(+). The enzyme catalyses 1-hexadecanoyl-2-(5Z,8Z,11Z,14Z-eicosatetraenoyl)-sn-glycero-3-phosphocholine + H2O = 1-hexadecanoyl-sn-glycero-3-phosphocholine + (5Z,8Z,11Z,14Z)-eicosatetraenoate + H(+). The catalysed reaction is 1-hexadecanoyl-2-(9Z-octadecenoyl)-sn-glycero-3-phospho-(1'-sn-glycerol) + H2O = 1-hexadecanoyl-sn-glycero-3-phospho-(1'-sn-glycerol) + (9Z)-octadecenoate + H(+). It carries out the reaction N-hexadecanoyl-1,2-di-(9Z-octadecenoyl)-sn-glycero-3-phosphoethanolamine + H2O = N-hexadecanoyl-1-(9Z-octadecenoyl)-sn-glycero-3-phosphoethanolamine + (9Z)-octadecenoate + H(+). It catalyses the reaction 1-hexadecanoyl-2-(9Z,12Z-octadecadienoyl)-sn-glycero-3-phosphoethanolamine + H2O = 1-hexadecanoyl-sn-glycero-3-phosphoethanolamine + (9Z,12Z)-octadecadienoate + H(+). The enzyme catalyses N,1-dihexadecanoyl-2-(9Z,12Z-octadecadienoyl)-sn-glycero-3-phosphoethanolamine + H2O = N,1-dihexadecanoyl-sn-glycero-3-phosphoethanolamine + (9Z,12Z)-octadecadienoate + H(+). Its function is as follows. Secretory calcium-dependent phospholipase A2 that primarily targets dietary phospholipids in the intestinal tract. Hydrolyzes the ester bond of the fatty acyl group attached at sn-2 position of phospholipids (phospholipase A2 activity) with preference for phosphatidylethanolamines and phosphatidylglycerols over phosphatidylcholines. May play a role in the biosynthesis of N-acyl ethanolamines that regulate energy metabolism and inflammation in the intestinal tract. Hydrolyzes N-acyl phosphatidylethanolamines to N-acyl lysophosphatidylethanolamines, which are further cleaved by a lysophospholipase D to release N-acyl ethanolamines. May act in an autocrine and paracrine manner. Has anti-helminth activity in a process regulated by gut microbiota. Upon helminth infection of intestinal epithelia, directly affects phosphatidylethanolamine contents in the membrane of helminth larvae, likely controlling an array of phospholipid-mediated cellular processes such as membrane fusion and cell division while providing for better immune recognition, ultimately reducing larvae integrity and infectivity. In Ovis aries (Sheep), this protein is Phospholipase A2 (PLA2G1B).